The chain runs to 223 residues: ATP-dependent Clp protease proteolytic subunit 2 (223 aa).

Positions 1-40 (MHAGSGNDMDITRMTPTRLDDEPDAPEPETREDDNKTLNS) are disordered. Residues 21–32 (DEPDAPEPETRE) show a composition bias toward acidic residues. Ser124 acts as the Nucleophile in catalysis. His149 is a catalytic residue.

Belongs to the peptidase S14 family. As to quaternary structure, fourteen ClpP subunits assemble into 2 heptameric rings which stack back to back to give a disk-like structure with a central cavity, resembling the structure of eukaryotic proteasomes.

It localises to the cytoplasm. The catalysed reaction is Hydrolysis of proteins to small peptides in the presence of ATP and magnesium. alpha-casein is the usual test substrate. In the absence of ATP, only oligopeptides shorter than five residues are hydrolyzed (such as succinyl-Leu-Tyr-|-NHMec, and Leu-Tyr-Leu-|-Tyr-Trp, in which cleavage of the -Tyr-|-Leu- and -Tyr-|-Trp bonds also occurs).. Its function is as follows. Cleaves peptides in various proteins in a process that requires ATP hydrolysis. Has a chymotrypsin-like activity. Plays a major role in the degradation of misfolded proteins. The sequence is that of ATP-dependent Clp protease proteolytic subunit 2 from Gluconobacter oxydans (strain 621H) (Gluconobacter suboxydans).